A 432-amino-acid polypeptide reads, in one-letter code: Adenylosuccinate synthetase (432 aa).

Residues 13–19 and 41–43 each bind GTP; these read GDEGKGK and GHT. The active-site Proton acceptor is the aspartate 14. Positions 14 and 41 each coordinate Mg(2+). IMP-binding positions include 14-17, 39-42, threonine 130, arginine 144, glutamine 225, threonine 240, and arginine 304; these read DEGK and NAGH. Histidine 42 serves as the catalytic Proton donor. 300–306 lines the substrate pocket; that stretch reads AVTGRPR. GTP contacts are provided by residues arginine 306, 332-334, and 415-417; these read KLD and STG.

It belongs to the adenylosuccinate synthetase family. As to quaternary structure, homodimer. The cofactor is Mg(2+).

It localises to the cytoplasm. The catalysed reaction is IMP + L-aspartate + GTP = N(6)-(1,2-dicarboxyethyl)-AMP + GDP + phosphate + 2 H(+). Its pathway is purine metabolism; AMP biosynthesis via de novo pathway; AMP from IMP: step 1/2. Functionally, plays an important role in the de novo pathway of purine nucleotide biosynthesis. Catalyzes the first committed step in the biosynthesis of AMP from IMP. This chain is Adenylosuccinate synthetase, found in Haemophilus influenzae (strain 86-028NP).